The sequence spans 144 residues: Large ribosomal subunit protein uL13 (144 aa).

It belongs to the universal ribosomal protein uL13 family. Part of the 50S ribosomal subunit.

Its function is as follows. This protein is one of the early assembly proteins of the 50S ribosomal subunit, although it is not seen to bind rRNA by itself. It is important during the early stages of 50S assembly. The sequence is that of Large ribosomal subunit protein uL13 from Lawsonia intracellularis (strain PHE/MN1-00).